We begin with the raw amino-acid sequence, 323 residues long: uncharacterized protein (323 aa).

The protein resides in the mitochondrion. This is an uncharacterized protein from Schizosaccharomyces pombe (strain 972 / ATCC 24843) (Fission yeast).